Consider the following 149-residue polypeptide: Globin (149 aa).

The region spanning Val2–Leu149 is the Globin domain. Residue His100 participates in heme binding.

The protein belongs to the globin family. In terms of assembly, monomer.

Oxygen binding protein. The sequence is that of Globin from Isoparorchis hypselobagri (Giant trematode).